Here is a 956-residue protein sequence, read N- to C-terminus: Angiomotin-like protein 1 (956 aa).

The interval 197–246 (QSQFFRGQQQQQQQQGAVGHGYYMAGGTSQKSRTEGRPTVNRANSGQAHK) is disordered. Residues Ser241 and Ser269 each carry the phosphoserine modification. The stretch at 259 to 279 (RSLSERIMQLSLERNGAKQHL) forms a coiled coil. Disordered regions lie at residues 274–322 (GAKQ…QMMS), 382–405 (PSTM…LHSV), and 411–430 (LPMA…SQQL). The segment covering 282-294 (SGNGKGFKVGGGP) has biased composition (gly residues). Ser295 is subject to Phosphoserine. Residues 382 to 398 (PSTMQQHSPMSSQTSSA) are compositionally biased toward polar residues. Coiled coils occupy residues 438-639 (VERA…WLER) and 665-694 (ALLE…YLEE). Ser720 is modified (phosphoserine). Residues 729–762 (SLEAHIWQEEEEVVQANRRCQDMEYTIKNLHAKI) are a coiled coil. Positions 773-823 (QQRSRKDAGKTDSSSLRPARSVPSIAAATGTHSRQTSLTSSQLAEEKKEEK) are disordered. Phosphoserine is present on residues Ser793, Ser805, and Ser828. The segment covering 802 to 815 (GTHSRQTSLTSSQL) has biased composition (polar residues). 2 disordered regions span residues 841 to 880 (ASAP…TQTD) and 894 to 944 (PSRG…LHKP). A compositionally biased stretch (low complexity) spans 852–866 (SALSSIASTTAASSA). Ser900 is subject to Phosphoserine. Thr902 is subject to Phosphothreonine. Ser906 bears the Phosphoserine mark. The short motif at 953–956 (EVLI) is the PDZ-binding element.

This sequence belongs to the angiomotin family. Post-translationally, polyubiquitinated by NEDD4, leading to proteasomal degradation.

The protein localises to the cell junction. It is found in the tight junction. Functionally, inhibits the Wnt/beta-catenin signaling pathway, probably by recruiting CTNNB1 to recycling endosomes and hence preventing its translocation to the nucleus. This chain is Angiomotin-like protein 1 (AMOTL1), found in Homo sapiens (Human).